Consider the following 40-residue polypeptide: Photosystem II reaction center protein J (40 aa).

A helical transmembrane segment spans residues 8–28; that stretch reads IPLWLIGTVAGIPVIGSVGVF.

Belongs to the PsbJ family. PSII is composed of 1 copy each of membrane proteins PsbA, PsbB, PsbC, PsbD, PsbE, PsbF, PsbH, PsbI, PsbJ, PsbK, PsbL, PsbM, PsbT, PsbX, PsbY, PsbZ, Psb30/Ycf12, at least 3 peripheral proteins of the oxygen-evolving complex and a large number of cofactors. It forms dimeric complexes.

The protein resides in the plastid. The protein localises to the chloroplast thylakoid membrane. Functionally, one of the components of the core complex of photosystem II (PSII). PSII is a light-driven water:plastoquinone oxidoreductase that uses light energy to abstract electrons from H(2)O, generating O(2) and a proton gradient subsequently used for ATP formation. It consists of a core antenna complex that captures photons, and an electron transfer chain that converts photonic excitation into a charge separation. The chain is Photosystem II reaction center protein J from Acorus calamus (Sweet flag).